Reading from the N-terminus, the 273-residue chain is Putative phosphoenolpyruvate synthase regulatory protein (273 aa).

153 to 160 serves as a coordination point for ADP; that stretch reads AVSRAGKT.

The protein belongs to the pyruvate, phosphate/water dikinase regulatory protein family. PSRP subfamily.

It carries out the reaction [pyruvate, water dikinase] + ADP = [pyruvate, water dikinase]-phosphate + AMP + H(+). The catalysed reaction is [pyruvate, water dikinase]-phosphate + phosphate + H(+) = [pyruvate, water dikinase] + diphosphate. In terms of biological role, bifunctional serine/threonine kinase and phosphorylase involved in the regulation of the phosphoenolpyruvate synthase (PEPS) by catalyzing its phosphorylation/dephosphorylation. The polypeptide is Putative phosphoenolpyruvate synthase regulatory protein (Xylella fastidiosa (strain 9a5c)).